Reading from the N-terminus, the 380-residue chain is Cytochrome b (380 aa).

Transmembrane regions (helical) follow at residues 34–54 (FGSLLGICLMTQILTGLLLAM), 78–99 (WLIRNLHANGASFFFICIYLHI), 114–134 (WNTGVILLLTLMATAFVGYVL), and 179–199 (FFALHFLLPFMIAGLTLVHLT). Positions 84 and 98 each coordinate heme b. Heme b contacts are provided by histidine 183 and histidine 197. Histidine 202 contributes to the a ubiquinone binding site. The next 4 helical transmembrane spans lie at 227 to 247 (LKDILGFTLMLLPLTTLALFS), 289 to 309 (LGGVLALAASVLILFLAPFLH), 321 to 341 (LSQLLFWILVANLFILTWVGS), and 348 to 368 (FIIIGQLASFTYFTILLILFP).

It belongs to the cytochrome b family. In terms of assembly, the cytochrome bc1 complex contains 11 subunits: 3 respiratory subunits (MT-CYB, CYC1 and UQCRFS1), 2 core proteins (UQCRC1 and UQCRC2) and 6 low-molecular weight proteins (UQCRH/QCR6, UQCRB/QCR7, UQCRQ/QCR8, UQCR10/QCR9, UQCR11/QCR10 and a cleavage product of UQCRFS1). This cytochrome bc1 complex then forms a dimer. The cofactor is heme b.

It is found in the mitochondrion inner membrane. In terms of biological role, component of the ubiquinol-cytochrome c reductase complex (complex III or cytochrome b-c1 complex) that is part of the mitochondrial respiratory chain. The b-c1 complex mediates electron transfer from ubiquinol to cytochrome c. Contributes to the generation of a proton gradient across the mitochondrial membrane that is then used for ATP synthesis. This chain is Cytochrome b (MT-CYB), found in Procellaria parkinsoni (Black petrel).